A 460-amino-acid chain; its full sequence is Adenosylhomocysteinase (460 aa).

Substrate is bound by residues T83, D158, and E184. Position 185–187 (185–187 (TTT)) interacts with NAD(+). Substrate is bound by residues K214 and D218. NAD(+)-binding positions include N219, 248 to 253 (GYGDVG), E271, 327 to 329 (IGH), and N373.

This sequence belongs to the adenosylhomocysteinase family. NAD(+) is required as a cofactor.

Its subcellular location is the cytoplasm. It catalyses the reaction S-adenosyl-L-homocysteine + H2O = L-homocysteine + adenosine. It functions in the pathway amino-acid biosynthesis; L-homocysteine biosynthesis; L-homocysteine from S-adenosyl-L-homocysteine: step 1/1. Its function is as follows. May play a key role in the regulation of the intracellular concentration of adenosylhomocysteine. The chain is Adenosylhomocysteinase from Bdellovibrio bacteriovorus (strain ATCC 15356 / DSM 50701 / NCIMB 9529 / HD100).